A 396-amino-acid polypeptide reads, in one-letter code: Acetate kinase (396 aa).

Residue Asn-7 participates in Mg(2+) binding. ATP is bound at residue Lys-14. Arg-91 lines the substrate pocket. Asp-148 (proton donor/acceptor) is an active-site residue. ATP-binding positions include 208–212 (HLGNG), 283–285 (DFR), and 331–335 (GIGEN). Position 384 (Glu-384) interacts with Mg(2+).

The protein belongs to the acetokinase family. As to quaternary structure, homodimer. The cofactor is Mg(2+). It depends on Mn(2+) as a cofactor.

The protein localises to the cytoplasm. The catalysed reaction is acetate + ATP = acetyl phosphate + ADP. Its pathway is metabolic intermediate biosynthesis; acetyl-CoA biosynthesis; acetyl-CoA from acetate: step 1/2. Its function is as follows. Catalyzes the formation of acetyl phosphate from acetate and ATP. Can also catalyze the reverse reaction. The chain is Acetate kinase from Desulforamulus reducens (strain ATCC BAA-1160 / DSM 100696 / MI-1) (Desulfotomaculum reducens).